The following is a 295-amino-acid chain: Cytidine deaminase (295 aa).

2 consecutive CMP/dCMP-type deaminase domains span residues 48 to 168 (ADDE…FGPA) and 187 to 295 (EETT…YLAI). 89–91 (NLE) is a binding site for substrate. Position 102 (H102) interacts with Zn(2+). E104 acts as the Proton donor in catalysis. 2 residues coordinate Zn(2+): C129 and C132.

It belongs to the cytidine and deoxycytidylate deaminase family. As to quaternary structure, homodimer. Zn(2+) serves as cofactor.

The enzyme catalyses cytidine + H2O + H(+) = uridine + NH4(+). It carries out the reaction 2'-deoxycytidine + H2O + H(+) = 2'-deoxyuridine + NH4(+). This enzyme scavenges exogenous and endogenous cytidine and 2'-deoxycytidine for UMP synthesis. This is Cytidine deaminase from Vibrio atlanticus (strain LGP32) (Vibrio splendidus (strain Mel32)).